The following is a 1435-amino-acid chain: DNA polymerase III PolC-type (1435 aa).

One can recognise an Exonuclease domain in the interval tyrosine 420–phenylalanine 576.

Belongs to the DNA polymerase type-C family. PolC subfamily.

It is found in the cytoplasm. The enzyme catalyses DNA(n) + a 2'-deoxyribonucleoside 5'-triphosphate = DNA(n+1) + diphosphate. Required for replicative DNA synthesis. This DNA polymerase also exhibits 3' to 5' exonuclease activity. This Staphylococcus aureus protein is DNA polymerase III PolC-type.